Consider the following 238-residue polypeptide: Probable transcriptional regulatory protein MGAS10750_Spy0264 (238 aa).

Belongs to the TACO1 family. YeeN subfamily.

It is found in the cytoplasm. This Streptococcus pyogenes serotype M4 (strain MGAS10750) protein is Probable transcriptional regulatory protein MGAS10750_Spy0264.